Here is a 427-residue protein sequence, read N- to C-terminus: Trigger factor (427 aa).

The PPIase FKBP-type domain occupies 163-248; sequence GDTVVIDFVG…IHEVKAKEVP (86 aa).

This sequence belongs to the FKBP-type PPIase family. Tig subfamily.

Its subcellular location is the cytoplasm. The enzyme catalyses [protein]-peptidylproline (omega=180) = [protein]-peptidylproline (omega=0). In terms of biological role, involved in protein export. Acts as a chaperone by maintaining the newly synthesized protein in an open conformation. Functions as a peptidyl-prolyl cis-trans isomerase. The polypeptide is Trigger factor (Streptococcus suis (strain 98HAH33)).